Consider the following 88-residue polypeptide: Small ribosomal subunit protein bS20 (88 aa).

Belongs to the bacterial ribosomal protein bS20 family.

Binds directly to 16S ribosomal RNA. The sequence is that of Small ribosomal subunit protein bS20 from Nitrobacter winogradskyi (strain ATCC 25391 / DSM 10237 / CIP 104748 / NCIMB 11846 / Nb-255).